The primary structure comprises 190 residues: MKKLFLIIGAPGSGKTTDAEIIAKNNPDSINHYSTGELLRAEVASGSERGKIIEGFTSKGNLVPLEIVVETIVSAIKNAPKNVVLIDGYPRSTEQMEALDKILKEESDVELTNVIEVEVSEQVACDRVLGRARGADDNAEVFRNRMSVYLAPLKPIQAFYTAKGILHKINGERTIEEIVSEMEGFIKSRL.

12–17 (GSGKTT) is a binding site for ATP. Positions 34-63 (STGELLRAEVASGSERGKIIEGFTSKGNLV) are NMP. AMP contacts are provided by residues T35, R40, 61–63 (NLV), 88–91 (GYPR), and Q95. The tract at residues 130 to 136 (GRARGAD) is LID. R131 contributes to the ATP binding site. 2 residues coordinate AMP: R133 and R145. R173 contacts ATP.

It belongs to the adenylate kinase family. In terms of assembly, monomer.

The protein localises to the cytoplasm. The enzyme catalyses AMP + ATP = 2 ADP. The protein operates within purine metabolism; AMP biosynthesis via salvage pathway; AMP from ADP: step 1/1. Its function is as follows. Catalyzes the reversible transfer of the terminal phosphate group between ATP and AMP. Plays an important role in cellular energy homeostasis and in adenine nucleotide metabolism. The polypeptide is Adenylate kinase (Wolinella succinogenes (strain ATCC 29543 / DSM 1740 / CCUG 13145 / JCM 31913 / LMG 7466 / NCTC 11488 / FDC 602W) (Vibrio succinogenes)).